The chain runs to 193 residues: uncharacterized protein (193 aa).

This is an uncharacterized protein from Archaeoglobus fulgidus (strain ATCC 49558 / DSM 4304 / JCM 9628 / NBRC 100126 / VC-16).